Consider the following 119-residue polypeptide: Ribonuclease P protein component (119 aa).

This sequence belongs to the RnpA family. Consists of a catalytic RNA component (M1 or rnpB) and a protein subunit.

The enzyme catalyses Endonucleolytic cleavage of RNA, removing 5'-extranucleotides from tRNA precursor.. RNaseP catalyzes the removal of the 5'-leader sequence from pre-tRNA to produce the mature 5'-terminus. It can also cleave other RNA substrates such as 4.5S RNA. The protein component plays an auxiliary but essential role in vivo by binding to the 5'-leader sequence and broadening the substrate specificity of the ribozyme. This chain is Ribonuclease P protein component, found in Pediococcus pentosaceus (strain ATCC 25745 / CCUG 21536 / LMG 10740 / 183-1w).